The chain runs to 141 residues: Small ribosomal subunit protein uS12 (141 aa).

It belongs to the universal ribosomal protein uS12 family. As to quaternary structure, part of the 30S ribosomal subunit.

Its function is as follows. With S4 and S5 plays an important role in translational accuracy. Located at the interface of the 30S and 50S subunits. The polypeptide is Small ribosomal subunit protein uS12 (Methanosphaera stadtmanae (strain ATCC 43021 / DSM 3091 / JCM 11832 / MCB-3)).